Consider the following 250-residue polypeptide: Triosephosphate isomerase (250 aa).

Residue 9-11 participates in substrate binding; that stretch reads NWK. Residue histidine 96 is the Electrophile of the active site. The active-site Proton acceptor is glutamate 168. Substrate-binding positions include glycine 174, serine 216, and 237–238; that span reads GG.

The protein belongs to the triosephosphate isomerase family. As to quaternary structure, homodimer.

The protein localises to the cytoplasm. It carries out the reaction D-glyceraldehyde 3-phosphate = dihydroxyacetone phosphate. The protein operates within carbohydrate biosynthesis; gluconeogenesis. It participates in carbohydrate degradation; glycolysis; D-glyceraldehyde 3-phosphate from glycerone phosphate: step 1/1. In terms of biological role, involved in the gluconeogenesis. Catalyzes stereospecifically the conversion of dihydroxyacetone phosphate (DHAP) to D-glyceraldehyde-3-phosphate (G3P). In Leptospira interrogans serogroup Icterohaemorrhagiae serovar copenhageni (strain Fiocruz L1-130), this protein is Triosephosphate isomerase.